Consider the following 955-residue polypeptide: Kinesin-like protein K39 (955 aa).

Positions 12-392 constitute a Kinesin motor domain; it reads RVKVSVRVRP…LRYASRARDI (381 aa). An ATP-binding site is contributed by 122–129; that stretch reads GQTGSGKT. Positions 426–955 form a coiled coil; the sequence is PAYVSELKKK…EERAAELASQ (530 aa). Disordered stretches follow at residues 682 to 712 and 725 to 955; these read ELDA…RESE and TAAA…LASQ. 7 repeat units span residues 704–742, 743–781, 782–820, 821–859, 860–898, 899–937, and 938–955. Positions 704 to 955 are 7 X 39 AA approximate tandem repeats; it reads LEQQLRESEE…EERAAELASQ (252 aa). 5 stretches are compositionally biased toward basic and acidic residues: residues 785–794, 824–833, 863–872, 902–911, and 941–955; these read QLRDSEERAA, QLRESEERAA, and QLRD…LASQ.

The protein belongs to the TRAFAC class myosin-kinesin ATPase superfamily. Kinesin family.

It localises to the cytoplasm. The protein localises to the cytoskeleton. This Leishmania chagasi protein is Kinesin-like protein K39 (KIN).